Reading from the N-terminus, the 169-residue chain is Small ribosomal subunit protein uS5 (169 aa).

One can recognise an S5 DRBM domain in the interval 15-79 (LKDQVVAINR…ESAKKNLVKV (65 aa)).

It belongs to the universal ribosomal protein uS5 family. As to quaternary structure, part of the 30S ribosomal subunit. Contacts proteins S4 and S8.

In terms of biological role, with S4 and S12 plays an important role in translational accuracy. Functionally, located at the back of the 30S subunit body where it stabilizes the conformation of the head with respect to the body. This chain is Small ribosomal subunit protein uS5, found in Koribacter versatilis (strain Ellin345).